Here is an 853-residue protein sequence, read N- to C-terminus: MSTIENFDAHTPMMQQYLKLKAQHPEILLFYRMGDFYELFYDDAKRASQLLDISLTKRGASAGEPIPMAGIPYHAVENYLAKLVNQGESVAICEQIGDPATSKGPVERKVVRIVTPGTISDEALLQERQDNLLAAIWQDSKGFGYATLDISSGRFRLSEPADRETMAAELQRTNPAELLYAEDFAEMSLIEGRRGLRRRPLWEFEIDTARQQLNLQFGTRDLVGFGVENAPRGLCAAGCLLQYAKDTQRTTLPHIRSITMERQQDSIIMDAATRRNLEITQNLAGGAENTLTSVLDCTVTPMGSRMLKRWLHMPVRDTRVLLERQQTIGALQDFTAELQPVLRQVGDLERILARLALRTARPRDLARMRHAFQQLPELRAQLENVDSAPVQALREKMGEFAELRDLLERAIIDTPPVLVRDGGVIATGYNEELDEWRALADGATDYLERLEVRERERTGLDTLKVGFNAVHGYYIQISRGQSHLAPINYMRRQTLKNAERYIIPELKEYEDKVLTSKGKALALEKQLYEELFDLLLPHLEALQQSASALAELDVLVNLAERAYTLNYTCPTFIDKPGIRITEGRHPVVEQVLNEPFIANPLNLSPQRRMLIITGPNMGGKSTYMRQTALIALMAYIGSYVPAQKVEIGPIDRIFTRVGAADDLASGRSTFMVEMTETANILHNATEYSLVLMDEIGRGTSTYDGLSLAWACAENLANKIKALTLFATHYFELTQLPEKMEGVANVHLDALEHGDTIAFMHSVQDGAASKSYGLAVAALAGVPKEVIKRARQKLRELESISPNAAATQVDGTQMSLLSVPEETSPAVEALENLDPDSLTPRQALEWIYRLKSLV.

614-621 (GPNMGGKS) is an ATP binding site.

It belongs to the DNA mismatch repair MutS family.

This protein is involved in the repair of mismatches in DNA. It is possible that it carries out the mismatch recognition step. This protein has a weak ATPase activity. This chain is DNA mismatch repair protein MutS, found in Escherichia coli O127:H6 (strain E2348/69 / EPEC).